We begin with the raw amino-acid sequence, 187 residues long: Signal peptidase complex catalytic subunit SEC11 (187 aa).

The Cytoplasmic portion of the chain corresponds to 1–18; sequence MLSSLSPYMANPRNTLSQ. Residues 19 to 39 form a helical; Signal-anchor for type II membrane protein membrane-spanning segment; it reads VLNFGLVLSSAFMVWKALSVI. Topologically, residues 40-187 are lumenal; the sequence is TNSASPVVVV…MGLMVMLQRE (148 aa). Residues Ser-53 and His-92 each act as charge relay system in the active site. Asn-125 carries an N-linked (GlcNAc...) asparagine glycan. Asp-129 acts as the Charge relay system in catalysis. Residues 173–184 are C-terminal short (CTS) helix; sequence VLLGFMGLMVML.

The protein belongs to the peptidase S26B family. Component of the signal peptidase complex (SPC) composed of a catalytic subunit SEC11 and three accessory subunits SPC1, SPC2 and SPC3. The complex induces a local thinning of the ER membrane which is used to measure the length of the signal peptide (SP) h-region of protein substrates. This ensures the selectivity of the complex towards h-regions shorter than 18-20 amino acids. SPC associates with the translocon complex.

The protein localises to the endoplasmic reticulum membrane. The catalysed reaction is Cleavage of hydrophobic, N-terminal signal or leader sequences from secreted and periplasmic proteins.. Its function is as follows. Catalytic component of the signal peptidase complex (SPC) which catalyzes the cleavage of N-terminal signal sequences from nascent proteins as they are translocated into the lumen of the endoplasmic reticulum. Specifically cleaves N-terminal signal peptides that contain a hydrophobic alpha-helix (h-region) shorter than 18-20 amino acids. This Ajellomyces capsulatus (strain NAm1 / WU24) (Darling's disease fungus) protein is Signal peptidase complex catalytic subunit SEC11 (SEC11).